The chain runs to 299 residues: Protoheme IX farnesyltransferase 1 (299 aa).

9 consecutive transmembrane segments (helical) span residues 25–45 (VVVL…RAGV), 47–67 (WSVL…AAVV), 95–115 (LPAL…LLAF), 119–139 (LTAW…TGFL), 147–167 (IVIG…AVSG), 173–193 (PLLL…ALAI), 217–237 (ALHI…PYAI), 243–263 (LYLA…WVLY), and 279–299 (IGYL…LLNL).

Belongs to the UbiA prenyltransferase family. Protoheme IX farnesyltransferase subfamily.

It is found in the cell inner membrane. The enzyme catalyses heme b + (2E,6E)-farnesyl diphosphate + H2O = Fe(II)-heme o + diphosphate. Its pathway is porphyrin-containing compound metabolism; heme O biosynthesis; heme O from protoheme: step 1/1. Functionally, converts heme B (protoheme IX) to heme O by substitution of the vinyl group on carbon 2 of heme B porphyrin ring with a hydroxyethyl farnesyl side group. The protein is Protoheme IX farnesyltransferase 1 of Pseudomonas entomophila (strain L48).